The chain runs to 898 residues: Coiled-coil domain-containing protein 186 (898 aa).

3 disordered regions span residues 1–43, 68–95, and 702–749; these read MSET…NESK, NYIP…QIAN, and RRKL…SSVA. An N-acetylserine modification is found at S2. Residues 82-95 show a composition bias toward polar residues; the sequence is KTDTGSENSEQIAN. A coiled-coil region spans residues 201–712; that stretch reads KYLQQEHIIK…RKLDQVESGS (512 aa). Over residues 703–717 the composition is skewed to basic and acidic residues; sequence RKLDQVESGSYDKEV. Positions 718-734 are enriched in low complexity; the sequence is SSMGSRSSSSGSLNARS. Position 740 is a phosphoserine (S740). Coiled coils occupy residues 759 to 803 and 855 to 894; these read AMLI…IQSY and KLQA…LEQR.

The polypeptide is Coiled-coil domain-containing protein 186 (CCDC186) (Homo sapiens (Human)).